Consider the following 427-residue polypeptide: Enolase (427 aa).

Glutamine 163 contributes to the (2R)-2-phosphoglycerate binding site. The active-site Proton donor is the glutamate 205. Mg(2+)-binding residues include aspartate 242, glutamate 285, and aspartate 312. Residues lysine 337, arginine 366, serine 367, and lysine 388 each contribute to the (2R)-2-phosphoglycerate site. Lysine 337 serves as the catalytic Proton acceptor.

It belongs to the enolase family. Mg(2+) serves as cofactor.

It is found in the cytoplasm. The protein resides in the secreted. The protein localises to the cell surface. It catalyses the reaction (2R)-2-phosphoglycerate = phosphoenolpyruvate + H2O. It functions in the pathway carbohydrate degradation; glycolysis; pyruvate from D-glyceraldehyde 3-phosphate: step 4/5. Its function is as follows. Catalyzes the reversible conversion of 2-phosphoglycerate (2-PG) into phosphoenolpyruvate (PEP). It is essential for the degradation of carbohydrates via glycolysis. In Rhodopseudomonas palustris (strain TIE-1), this protein is Enolase.